We begin with the raw amino-acid sequence, 1720 residues long: MLISKNMPWRRLQGISFGMYSAEELKKLSVKSITNPRYLDSLGNPSANGLYDLALGPADSKEVCSTCVQDFSNCSGHLGHIELPLTVYNPLLFDKLYLLLRGSCLNCHMLTCPRAVIHLLLCQLRVLEVGALQAVYELERILNRFLEENPDPSASEIREELEQYTTEIVQNNLLGSQGAHVKNVCESKSKLIALFWKAHMNAKRCPHCKTGRSVVRKEHNSKLTITFPAMVHRTAGQKDSEPLGIEEAQIGKRGYLTPTSAREHLSALWKNEGFFLNYLFSGMDDDGMESRFNPSVFFLDFLVVPPSRYRPVSRLGDQMFTNGQTVNLQAVMKDVVLIRKLLALMAQEQKLPEEVATPTTDEEKDSLIAIDRSFLSTLPGQSLIDKLYNIWIRLQSHVNIVFDSEMDKLMMDKYPGIRQILEKKEGLFRKHMMGKRVDYAARSVICPDMYINTNEIGIPMVFATKLTYPQPVTPWNVQELRQAVINGPNVHPGASMVINEDGSRTALSAVDMTQREAVAKQLLTPATGAPKPQGTKIVCRHVKNGDILLLNRQPTLHRPSIQAHRARILPEEKVLRLHYANCKAYNADFDGDEMNAHFPQSELGRAEAYVLACTDQQYLVPKDGQPLAGLIQDHMVSGASMTTRGCFFTREHYMELVYRGLTDKVGRVKLLSPSILKPFPLWTGKQVVSTLLINIIPEDHIPLNLSGKAKITGKAWVKETPRSVPGFNPDSMCESQVIIREGELLCGVLDKAHYGSSAYGLVHCCYEIYGGETSGKVLTCLARLFTAYLQLYRGFTLGVEDILVKPKADVKRQRIIEESTHCGPQAVRAALNLPEAASYDEVRGKWQDAHLGKDQRDFNMIDLKFKEEVNHYSNEINKACMPFGLHRQFPENSLQMMVQSGAKGSTVNTMQISCLLGQIELEGRRPPLMASGKSLPCFEPYEFTPRAGGFVTGRFLTGIKPPEFFFHCMAGREGLVDTAVKTSRSGYLQRCIIKHLEGLVVQYDLTVRDSDGSVVQFLYGEDGLDIPKTQFLQPKQFPFLASNYEVIMKSQHLHEVLSRADPKKALHHFRAIKKWQSKHPNTLLRRGAFLSYSQKIQEAVKALKLESENRNGRSPGTQEMLRMWYELDEESRRKYQKKAAACPDPSLSVWRPDIYFASVSETFETKVDDYSQEWAAQTEKSYEKSELSLDRLRTLLQLKWQRSLCEPGEAVGLLAAQSIGEPSTQMTLNTFHFAGRGEMNVTLGIPRLREILMVASANIKTPMMSVPVLNTKKALKRVKSLKKQLTRVCLGEVLQKIDVQESFCMEEKQNKFQVYQLRFQFLPHAYYQQEKCLRPEDILRFMETRFFKLLMESIKKKNNKASAFRNVNTRRATQRDLDNAGELGRSRGEQEGDEEEEGHIVDAEAEEGDADASDAKRKEKQEEEVDYESEEEEEREGEENDDEDMQEERNPHREGARKTQEQDEEVGLGTEEDPSLPALLTQPRKPTHSQEPQGPEAMERRVQAVREIHPFIDDYQYDTEESLWCQVTVKLPLMKINFDMSSLVVSLAHGAVIYATKGITRCLLNETTNNKNEKELVLNTEGINLPELFKYAEVLDLRRLYSNDIHAIANTYGIEAALRVIEKEIKDVFAVYGIAVDPRHLSLVADYMCFEGVYKPLNRFGIRSNSSPLQQMTFETSFQFLKQATMLGSHDELRSPSACLVVGKVVRGGTGLFELKQPLR.

Residues Cys64, Cys67, Cys74, His77, Cys104, and Cys107 each contribute to the Zn(2+) site. A clamp region spans residues 110–201 (LTCPRAVIHL…IALFWKAHMN (92 aa)). Cys205 and Cys208 together coordinate Zn(2+). Phosphoserine is present on Ser240. The clamp stretch occupies residues 320-426 (FTNGQTVNLQ…IRQILEKKEG (107 aa)). Residues 403-416 (DSEMDKLMMDKYPG) are rudder. Positions 424, 429, and 436 each coordinate DNA. An involved in RRN3 binding to Pol I complex region spans residues 468-542 (YPQPVTPWNV…QGTKIVCRHV (75 aa)). Arg552 is a binding site for RNA. Asp588, Asp590, and Asp592 together coordinate Mg(2+). Asp592 contacts RNA. The tract at residues 805–883 (KPKADVKRQR…NEINKACMPF (79 aa)) is funnel. The bridging helix stretch occupies residues 960 to 1001 (KPPEFFFHCMAGREGLVDTAVKTSRSGYLQRCIIKHLEGLVV). The tract at residues 1060 to 1155 (ADPKKALHHF…SLSVWRPDIY (96 aa)) is mediates the interaction with TOP2A. Residues 1207–1248 (PGEAVGLLAAQSIGEPSTQMTLNTFHFAGRGEMNVTLGIPRL) form a trigger loop region. DNA is bound at residue Arg1249. The interval 1365 to 1498 (RNVNTRRATQ…SQEPQGPEAM (134 aa)) is disordered. The segment covering 1373-1390 (TQRDLDNAGELGRSRGEQ) has biased composition (basic and acidic residues). Phosphoserine is present on Ser1386. 2 stretches are compositionally biased toward acidic residues: residues 1391–1412 (EGDE…DADA) and 1422–1446 (EEEV…EDMQ). Basic and acidic residues predominate over residues 1447 to 1461 (EERNPHREGARKTQE). Positions 1462–1474 (QDEEVGLGTEEDP) are enriched in acidic residues.

The protein belongs to the RNA polymerase beta' chain family. Component of the RNA polymerase I (Pol I) complex consisting of 13 subunits: a ten-subunit catalytic core composed of POLR1A/RPA1, POLR1B/RPA2, POLR1C/RPAC1, POLR1D/RPAC2, POLR1H/RPA12, POLR2E/RPABC1, POLR2F/RPABC2, POLR2H/RPABC3, POLR2K/RPABC4 and POLR2L/RPABC5; a mobile stalk subunit POLR1F/RPA43 protruding from the core and additional subunits homologous to general transcription factors POLR1E/RPA49 and POLR1G/RPA34. Part of Pol I pre-initiation complex (PIC), in which Pol I core assembles with RRN3 and promoter-bound UTBF and SL1/TIF-IB complex. Interacts (via dock II domain) with TOP2A; this interaction may assist Pol I transcription initiation by releasing supercoils occurring during DNA unwinding. Interacts with CAVIN1; this interaction induces the dissociation of Pol I complex paused at rDNA terminator sequences. Interacts with MYO1C. Interacts with ERBB2. Interacts with DDX11. Interacts with RECQL5. It depends on Mg(2+) as a cofactor.

The protein localises to the nucleus. Its subcellular location is the nucleolus. It localises to the chromosome. The catalysed reaction is RNA(n) + a ribonucleoside 5'-triphosphate = RNA(n+1) + diphosphate. In terms of biological role, catalytic core component of RNA polymerase I (Pol I), a DNA-dependent RNA polymerase which synthesizes ribosomal RNA precursors using the four ribonucleoside triphosphates as substrates. Transcribes 47S pre-rRNAs from multicopy rRNA gene clusters, giving rise to 5.8S, 18S and 28S ribosomal RNAs. Pol I-mediated transcription cycle proceeds through transcription initiation, transcription elongation and transcription termination stages. During transcription initiation, Pol I pre-initiation complex (PIC) is recruited by the selectivity factor 1 (SL1/TIF-IB) complex bound to the core promoter that precedes an rDNA repeat unit. The PIC assembly bends the promoter favoring the formation of the transcription bubble and promoter escape. Once the polymerase has escaped from the promoter it enters the elongation phase during which RNA is actively polymerized, based on complementarity with the template DNA strand. Highly processive, assembles in structures referred to as 'Miller trees' where many elongating Pol I complexes queue and transcribe the same rDNA coding regions. At terminator sequences downstream of the rDNA gene, PTRF interacts with Pol I and halts Pol I transcription leading to the release of the RNA transcript and polymerase from the DNA. Forms Pol I active center together with the second largest subunit POLR1B/RPA2. Appends one nucleotide at a time to the 3' end of the nascent RNA, with POLR1A/RPA1 contributing a Mg(2+)-coordinating DxDGD motif, and POLR1B/RPA2 participating in the coordination of a second Mg(2+) ion and providing lysine residues believed to facilitate Watson-Crick base pairing between the incoming nucleotide and the template base. Typically, Mg(2+) ions direct a 5' nucleoside triphosphate to form a phosphodiester bond with the 3' hydroxyl of the preceding nucleotide of the nascent RNA, with the elimination of pyrophosphate. Has proofreading activity: Pauses and backtracks to allow the cleavage of a missincorporated nucleotide via POLR1H/RPA12. High Pol I processivity is associated with decreased transcription fidelity. This is DNA-directed RNA polymerase I subunit RPA1 from Homo sapiens (Human).